A 117-amino-acid polypeptide reads, in one-letter code: Immunoglobulin heavy variable 4-38-2 (117 aa).

The signal sequence occupies residues Met-1–Ser-19. The framework-1 stretch occupies residues Gln-20–Ser-44. The 98-residue stretch at Gln-20 to Arg-117 folds into the Ig-like domain. A disulfide bridge connects residues Cys-41 and Cys-115. The interval Gly-45 to Tyr-53 is complementarity-determining-1. The tract at residues Trp-54–Ser-70 is framework-2. The interval Ile-71–Thr-77 is complementarity-determining-2. Residues Tyr-78–Cys-115 are framework-3. The complementarity-determining-3 stretch occupies residues Ala-116–Arg-117.

In terms of assembly, immunoglobulins are composed of two identical heavy chains and two identical light chains; disulfide-linked.

It localises to the secreted. It is found in the cell membrane. V region of the variable domain of immunoglobulin heavy chains that participates in the antigen recognition. Immunoglobulins, also known as antibodies, are membrane-bound or secreted glycoproteins produced by B lymphocytes. In the recognition phase of humoral immunity, the membrane-bound immunoglobulins serve as receptors which, upon binding of a specific antigen, trigger the clonal expansion and differentiation of B lymphocytes into immunoglobulins-secreting plasma cells. Secreted immunoglobulins mediate the effector phase of humoral immunity, which results in the elimination of bound antigens. The antigen binding site is formed by the variable domain of one heavy chain, together with that of its associated light chain. Thus, each immunoglobulin has two antigen binding sites with remarkable affinity for a particular antigen. The variable domains are assembled by a process called V-(D)-J rearrangement and can then be subjected to somatic hypermutations which, after exposure to antigen and selection, allow affinity maturation for a particular antigen. The polypeptide is Immunoglobulin heavy variable 4-38-2 (Homo sapiens (Human)).